Here is a 322-residue protein sequence, read N- to C-terminus: UV DNA damage endonuclease (322 aa).

It belongs to the uve1/UvsE family.

In terms of biological role, component in a DNA repair pathway. Removal of UV LIGHT damaged nucleotides. Recognizes pyrimidine dimers and cleave a phosphodiester bond immediately 5' to the lesion. This chain is UV DNA damage endonuclease, found in Nostoc sp. (strain PCC 7120 / SAG 25.82 / UTEX 2576).